A 489-amino-acid polypeptide reads, in one-letter code: Coronin-1B (489 aa).

Ser-2 carries the post-translational modification Phosphoserine. WD repeat units follow at residues Gly-80–Pro-120, Gly-130–Arg-170, Leu-174–Glu-213, Ala-217–Ala-260, and Asp-265–His-305. Residues Asp-414–Ser-443 are disordered. A compositionally biased stretch (low complexity) spans Gly-427–Ser-443. Residues Glu-449–Ile-474 are a coiled coil.

This sequence belongs to the WD repeat coronin family. In terms of assembly, forms homooligomers, but does not form complexes with the other coronins. Interacts with Arp2/3 complex components, including ACTR2, ARPC1B and ARPC2. Binds actin. Phosphorylation on Ser-2 regulates the interaction with the Arp2/3 complex and cell motility in fibroblasts. Phosphorylation does not seem to affect subcellular location.

The protein localises to the cytoplasm. It localises to the cytoskeleton. The protein resides in the stress fiber. Its function is as follows. Regulates leading edge dynamics and cell motility in fibroblasts. May be involved in cytokinesis and signal transduction. The sequence is that of Coronin-1B (CORO1B) from Pongo abelii (Sumatran orangutan).